Consider the following 859-residue polypeptide: DNA mismatch repair protein MutS (859 aa).

ATP is bound at residue 617–624 (GPNMGGKS). The interval 799–821 (ETTSLPHEQPRAKPGKPAVPQQS) is disordered.

Belongs to the DNA mismatch repair MutS family.

Functionally, this protein is involved in the repair of mismatches in DNA. It is possible that it carries out the mismatch recognition step. This protein has a weak ATPase activity. This Pseudomonas savastanoi pv. phaseolicola (strain 1448A / Race 6) (Pseudomonas syringae pv. phaseolicola (strain 1448A / Race 6)) protein is DNA mismatch repair protein MutS.